A 130-amino-acid chain; its full sequence is DNA-directed RNA polymerase subunit omega (130 aa).

The tract at residues E109–E130 is disordered.

The protein belongs to the RNA polymerase subunit omega family. As to quaternary structure, the RNAP catalytic core consists of 2 alpha, 1 beta, 1 beta' and 1 omega subunit. When a sigma factor is associated with the core the holoenzyme is formed, which can initiate transcription.

The enzyme catalyses RNA(n) + a ribonucleoside 5'-triphosphate = RNA(n+1) + diphosphate. Promotes RNA polymerase assembly. Latches the N- and C-terminal regions of the beta' subunit thereby facilitating its interaction with the beta and alpha subunits. The sequence is that of DNA-directed RNA polymerase subunit omega from Rhodopseudomonas palustris (strain BisA53).